A 211-amino-acid chain; its full sequence is Endonuclease III (211 aa).

Positions 108 to 127 (RAALEALPGVGRKTANVVLN) constitute a HhH domain. [4Fe-4S] cluster is bound by residues Cys187, Cys194, Cys197, and Cys203.

This sequence belongs to the Nth/MutY family. [4Fe-4S] cluster serves as cofactor.

The catalysed reaction is 2'-deoxyribonucleotide-(2'-deoxyribose 5'-phosphate)-2'-deoxyribonucleotide-DNA = a 3'-end 2'-deoxyribonucleotide-(2,3-dehydro-2,3-deoxyribose 5'-phosphate)-DNA + a 5'-end 5'-phospho-2'-deoxyribonucleoside-DNA + H(+). In terms of biological role, DNA repair enzyme that has both DNA N-glycosylase activity and AP-lyase activity. The DNA N-glycosylase activity releases various damaged pyrimidines from DNA by cleaving the N-glycosidic bond, leaving an AP (apurinic/apyrimidinic) site. The AP-lyase activity cleaves the phosphodiester bond 3' to the AP site by a beta-elimination, leaving a 3'-terminal unsaturated sugar and a product with a terminal 5'-phosphate. This chain is Endonuclease III, found in Escherichia coli O6:H1 (strain CFT073 / ATCC 700928 / UPEC).